The chain runs to 192 residues: ATP synthase subunit b (192 aa).

A helical membrane pass occupies residues 7 to 27 (LLLVLGVMLLATGVALAAGGE).

This sequence belongs to the ATPase B chain family. F-type ATPases have 2 components, F(1) - the catalytic core - and F(0) - the membrane proton channel. F(1) has five subunits: alpha(3), beta(3), gamma(1), delta(1), epsilon(1). F(0) has three main subunits: a(1), b(2) and c(10-14). The alpha and beta chains form an alternating ring which encloses part of the gamma chain. F(1) is attached to F(0) by a central stalk formed by the gamma and epsilon chains, while a peripheral stalk is formed by the delta and b chains.

Its subcellular location is the cell inner membrane. Functionally, f(1)F(0) ATP synthase produces ATP from ADP in the presence of a proton or sodium gradient. F-type ATPases consist of two structural domains, F(1) containing the extramembraneous catalytic core and F(0) containing the membrane proton channel, linked together by a central stalk and a peripheral stalk. During catalysis, ATP synthesis in the catalytic domain of F(1) is coupled via a rotary mechanism of the central stalk subunits to proton translocation. In terms of biological role, component of the F(0) channel, it forms part of the peripheral stalk, linking F(1) to F(0). This chain is ATP synthase subunit b, found in Oleidesulfovibrio alaskensis (strain ATCC BAA-1058 / DSM 17464 / G20) (Desulfovibrio alaskensis).